Here is a 309-residue protein sequence, read N- to C-terminus: Glutaminase (309 aa).

Residues Ser64, Asn114, Glu160, Asn167, Tyr191, Tyr243, and Val261 each contribute to the substrate site.

It belongs to the glutaminase family. Homotetramer.

The enzyme catalyses L-glutamine + H2O = L-glutamate + NH4(+). This Methylobacterium sp. (strain 4-46) protein is Glutaminase.